The chain runs to 509 residues: Sorting nexin MVP1 (509 aa).

Over residues 1–25 (MDTYSGQNGWADTSNASPWGDTNDT) the composition is skewed to polar residues. Positions 1–28 (MDTYSGQNGWADTSNASPWGDTNDTMPI) are disordered. Residues 126–245 (QLDIISIEEI…TFLTVPTDLT (120 aa)) enclose the PX domain. Arg170, Ser172, Lys196, and Arg211 together coordinate a 1,2-diacyl-sn-glycero-3-phospho-(1D-myo-inositol-3-phosphate).

This sequence belongs to the sorting nexin family.

The protein localises to the cytoplasm. Its subcellular location is the membrane. Its function is as follows. Required for vacuolar protein sorting. In Candida glabrata (strain ATCC 2001 / BCRC 20586 / JCM 3761 / NBRC 0622 / NRRL Y-65 / CBS 138) (Yeast), this protein is Sorting nexin MVP1 (MVP1).